A 1220-amino-acid chain; its full sequence is Cullin-associated NEDD8-dissociated protein 1 (1220 aa).

HEAT repeat units follow at residues 1–35, 42–79, 121–157, 259–295, 365–410, 615–650, 680–700, 701–737, 738–775, 810–847, 850–887, and 1020–1057; these read MEEG…DANH, ESFP…KIPQ, FYTS…SLEI, ADYT…YQQV, LSRL…HVPR, IFLR…SVTD, TTAY…YLAE, SLLE…SILL, KSKN…VISK, FQSK…DYGK, LPAN…QSEK, and EVSQ…KSSV.

Belongs to the CAND family.

It is found in the nucleus. Functionally, key assembly factor of SCF (SKP1-CUL1-F-box protein) E3 ubiquitin ligase complexes that promotes the exchange of the substrate-recognition F-box subunit in SCF complexes, thereby playing a key role in the cellular repertoire of SCF complexes. Acts as a F-box protein exchange factor. The chain is Cullin-associated NEDD8-dissociated protein 1 (knd1) from Schizosaccharomyces pombe (strain 972 / ATCC 24843) (Fission yeast).